A 309-amino-acid polypeptide reads, in one-letter code: D-alanine--D-alanine ligase (309 aa).

Residues 110–305 (KLCWTGAGLP…FQELVWHILE (196 aa)) enclose the ATP-grasp domain. 136-191 (RQALGFPVIVKPAEEGSSIGMSRAATAEELAQAWERASGYGCAVFAERWIDGVEYT) contacts ATP. Mg(2+) contacts are provided by D259, E272, and N274.

It belongs to the D-alanine--D-alanine ligase family. Mg(2+) serves as cofactor. The cofactor is Mn(2+).

The protein localises to the cytoplasm. It carries out the reaction 2 D-alanine + ATP = D-alanyl-D-alanine + ADP + phosphate + H(+). Its pathway is cell wall biogenesis; peptidoglycan biosynthesis. Functionally, cell wall formation. This is D-alanine--D-alanine ligase from Methylococcus capsulatus (strain ATCC 33009 / NCIMB 11132 / Bath).